A 508-amino-acid polypeptide reads, in one-letter code: MGSCCSCPDKDTVPDNHRNKFKVINVDDDGNELGSGVMELTDTELILYTRKRDSVKWHYLCLRRYGYDSNLFSFESGRRCQTGQGIFAFKCARAEELFNMLQEIMQNNSINVVEEPVVERSSHQTELEVPRTPRTPTTPGLGAQNLPNGYPRYPSFGDASSHPSSRHPSVGSARLPSVGEESTHPLLVAEEQVHTYVNTTGVQEERKNRASVHVPPEARVSNAESNTPKEEPSNPEDRDPQVLLKPEGVRFVLGPTPVQKQLMEKEKLEQLGKDPVSGSGAGNTEWDTGYDSDERRDVPPVNKLVYENINGLSIPSASGVRRGRLTSTSTSDTQNINNSAQRRPALLNYENLPSLPPVWEARKLSRDEDDNLGPKTPSLNGYHNNLDPMHNYVNTENVTVPASAHKIDYSKRRDCTPTVFNFDIRRPSLEHRQLNYIQVDLEGGSDSDNPQTPKTPTTPLPQTPTRRTELYAVIDIERTAAMSNLQKALPRDDGTSRKTRHNSTDLPM.

Glycine 2 carries N-myristoyl glycine lipidation. The IRS-type PTB domain occupies 13 to 115 (VPDNHRNKFK…QNNSINVVEE (103 aa)). The tract at residues 116 to 180 (PVVERSSHQT…GSARLPSVGE (65 aa)) is disordered. Basic and acidic residues predominate over residues 117-131 (VVERSSHQTELEVPR). Phosphoserine is present on serine 177. Tyrosine 196 carries the phosphotyrosine; by FGFR1 modification. Disordered stretches follow at residues 201–243 (GVQE…PQVL) and 268–298 (LEQLGKDPVSGSGAGNTEWDTGYDSDERRDV). Residues serine 211 and serine 221 each carry the phosphoserine modification. Residues 227–240 (TPKEEPSNPEDRDP) are compositionally biased toward basic and acidic residues. Tyrosine 306 is modified (phosphotyrosine; by FGFR1). The interval 315 to 345 (PSASGVRRGRLTSTSTSDTQNINNSAQRRPA) is disordered. A compositionally biased stretch (polar residues) spans 325 to 341 (LTSTSTSDTQNINNSAQ). Tyrosine 349 bears the Phosphotyrosine; by FGFR1 mark. At serine 365 the chain carries Phosphoserine. Residues tyrosine 392 and tyrosine 436 each carry the phosphotyrosine; by FGFR1 modification. Residues 441-467 (LEGGSDSDNPQTPKTPTTPLPQTPTRR) are disordered. A Phosphotyrosine; by FGFR1 modification is found at tyrosine 471. The interval 483-508 (SNLQKALPRDDGTSRKTRHNSTDLPM) is disordered.

As to quaternary structure, part of a complex containing FRS2, GRB2, GAB1, PIK3R1 and SOS1. Part of a complex containing GRB2 and CBL. Binds ALK, CKS2, FGFR1, RET, MAPK1/ERK2, MAPK3/ERK1 and SRC. The tyrosine-phosphorylated protein binds the SH2 domains of GRB2 and PTPN11. Interacts with NTRK1, NTRK2 and NTRK3 (phosphorylated upon ligand-binding). Identified in a complex containing FGFR4, NCAM1, CDH2, PLCG1, FRS2, SRC, SHC1, GAP43 and CTTN. Phosphorylated on tyrosine residues upon stimulation by FGF2 or NGFB. Phosphorylated by ULK2 (in vitro). Phosphorylated on tyrosine residues by activated ALK and FGFR1. Phosphorylated on tyrosine residues upon activation of FGFR2 and FGFR3. Phosphorylated on threonine residues by MAP kinases; this inhibits tyrosine phosphorylation, and thereby down-regulates FRS2-mediated activation of MAP kinases. Post-translationally, ubiquitinated when tyrosine phosphorylated and in a complex with GRB2. The unphosphorylated form is not subject to ubiquitination. In terms of tissue distribution, ubiquitous. Expression is highest in brain, kidney, lung and testis.

It is found in the membrane. Its function is as follows. Adapter protein that links activated FGR and NGF receptors to downstream signaling pathways. Plays an important role in the activation of MAP kinases and in the phosphorylation of PIK3R1, the regulatory subunit of phosphatidylinositol 3-kinase, in response to ligand-mediated activation of FGFR1. Modulates signaling via SHC1 by competing for a common binding site on NTRK1. The chain is Fibroblast growth factor receptor substrate 2 (Frs2) from Mus musculus (Mouse).